The primary structure comprises 287 residues: ATP synthase gamma chain (287 aa).

Belongs to the ATPase gamma chain family. F-type ATPases have 2 components, CF(1) - the catalytic core - and CF(0) - the membrane proton channel. CF(1) has five subunits: alpha(3), beta(3), gamma(1), delta(1), epsilon(1). CF(0) has three main subunits: a, b and c.

It is found in the cell membrane. Its function is as follows. Produces ATP from ADP in the presence of a proton gradient across the membrane. The gamma chain is believed to be important in regulating ATPase activity and the flow of protons through the CF(0) complex. In Bacillus caldotenax, this protein is ATP synthase gamma chain.